The sequence spans 71 residues: Putative defensin-like protein 303 (71 aa).

The first 25 residues, 1–25, serve as a signal peptide directing secretion; it reads MKSNKATFFLGLLLVYAFCIMLIES. 3 disulfides stabilise this stretch: Cys27–Cys45, Cys33–Cys50, and Cys39–Cys52.

This sequence belongs to the DEFL family.

The protein localises to the secreted. The polypeptide is Putative defensin-like protein 303 (Arabidopsis thaliana (Mouse-ear cress)).